The following is a 1040-amino-acid chain: Neprilysin-4 (1040 aa).

The disordered stretch occupies residues 1–27; it reads MSRHSQLKLAMPSVHGAPATAPGSPMN. Residues 1 to 45 form a required for maintaining muscle integrity region; that stretch reads MSRHSQLKLAMPSVHGAPATAPGSPMNAKARSVKLGLGVNQRTGR. Residues 1 to 55 lie on the Cytoplasmic side of the membrane; sequence MSRHSQLKLAMPSVHGAPATAPGSPMNAKARSVKLGLGVNQRTGRVQWCPGLTCC. A helical; Signal-anchor for type II membrane protein transmembrane segment spans residues 56-76; the sequence is KMLLLLPVVMLPLTLVLILIM. The Extracellular portion of the chain corresponds to 77–1040; it reads RLDGMLAALQ…MNPQKKCSVW (964 aa). The Peptidase M13 domain occupies 251-1040; it reads EEGTREGIRM…MNPQKKCSVW (790 aa). Cystine bridges form between C277–C1025, C285–C985, C452–C700, and C909–C1037. N-linked (GlcNAc...) asparagine glycosylation is found at N387, N593, N723, and N819. H872 serves as a coordination point for Zn(2+). E873 is an active-site residue. A Zn(2+)-binding site is contributed by H876. An N-linked (GlcNAc...) asparagine glycan is attached at N916. A Zn(2+)-binding site is contributed by E934. The Proton donor role is filled by D938. N969 carries an N-linked (GlcNAc...) asparagine glycan.

It belongs to the peptidase M13 family. Interacts (via intracellular domain) with the putative carbohydrate kinase CG3534. The cofactor is Zn(2+). Expressed in the gonads and testes of adults, and the adult and larval brain (at protein level). In embryos, expressed in the pericardial, muscle founder and glia cells (at protein level). In stage 12 embryos, expressed in specific dorsal muscle founder cells such as DA1 and DO2, and also in the certain pericardial progenitor cells where expression persists throughout embryogenesis. Expressed in the glia cells of the embryonic, larval and adult central nervous system. Expressed in the somatic muscles of larvae, pupae and adults. Isoform A: Detected in the male abdomen (at protein level). Isoform B: Not detected in the male or female abdomen (at protein level).

It is found in the cell membrane. Its subcellular location is the sarcoplasmic reticulum. The protein localises to the cytoplasm. The catalysed reaction is Preferential cleavage of polypeptides between hydrophobic residues, particularly with Phe or Tyr at P1'.. Metalloendoprotease which cleaves peptides at the amino side of hydrophobic residues - such as the hormones Akh and Dh31, and the neuropeptides Allatostatins (AST1, AST2, AST3 and AST4), Crz, Drosulfakinins (DSK-I and DSK-II), Lk, sNPF and the tachykinin peptides TK-1, TK-2, TK-4 and TK-5. Functions in female fertility, memory formation and may also act in regulating insulin signaling and food intake. Likely to be involved in controlling feeding behavior and the expression of insulin-like peptides by cleaving various regulatory peptides that include certain Drosulfakinins, Allatostatins and tachykinin peptides. Required in females for normal patterns of egg laying and hatching. Required in the dorsal paired medial neurons for the proper formation of long-term (LTM) and middle-term memories (MTM). Also required in the mushroom body neurons where it functions redundantly with neprilysins Nep2 and Nep3, in normal LTM formation. Its function is as follows. Cleaves angiotensin-1 and tachykinin neuropeptide substance P. Functions in maintaining muscle integrity, possibly independently of its endopeptidase activity. The sequence is that of Neprilysin-4 from Drosophila melanogaster (Fruit fly).